The primary structure comprises 630 residues: tRNA uridine 5-carboxymethylaminomethyl modification enzyme MnmG (630 aa).

15–20 (GAGHAG) lines the FAD pocket. 274–288 (GPRYCPSIEDKIVRF) serves as a coordination point for NAD(+).

Belongs to the MnmG family. In terms of assembly, homodimer. Heterotetramer of two MnmE and two MnmG subunits. FAD serves as cofactor.

It is found in the cytoplasm. Functionally, NAD-binding protein involved in the addition of a carboxymethylaminomethyl (cmnm) group at the wobble position (U34) of certain tRNAs, forming tRNA-cmnm(5)s(2)U34. This chain is tRNA uridine 5-carboxymethylaminomethyl modification enzyme MnmG, found in Alkaliphilus oremlandii (strain OhILAs) (Clostridium oremlandii (strain OhILAs)).